A 186-amino-acid polypeptide reads, in one-letter code: Inner membrane-spanning protein YciB (186 aa).

5 helical membrane passes run 10-30 (IILF…AVAI), 47-67 (VEPL…ATLL), 76-96 (WKPT…QLVF), 121-141 (WGWT…AYNF), and 149-169 (FKLF…ALYL).

Belongs to the YciB family.

Its subcellular location is the cell inner membrane. Its function is as follows. Plays a role in cell envelope biogenesis, maintenance of cell envelope integrity and membrane homeostasis. This is Inner membrane-spanning protein YciB from Acidovorax sp. (strain JS42).